The sequence spans 279 residues: Large ribosomal subunit protein uL2 (279 aa).

The disordered stretch occupies residues 216 to 279; it reads KRPSVRGVVM…IQKRKRNRNR (64 aa). Residues 270-279 show a composition bias toward basic residues; sequence IQKRKRNRNR.

The protein belongs to the universal ribosomal protein uL2 family. Part of the 50S ribosomal subunit. Forms a bridge to the 30S subunit in the 70S ribosome.

Functionally, one of the primary rRNA binding proteins. Required for association of the 30S and 50S subunits to form the 70S ribosome, for tRNA binding and peptide bond formation. It has been suggested to have peptidyltransferase activity; this is somewhat controversial. Makes several contacts with the 16S rRNA in the 70S ribosome. The protein is Large ribosomal subunit protein uL2 of Leptospira interrogans serogroup Icterohaemorrhagiae serovar copenhageni (strain Fiocruz L1-130).